A 374-amino-acid chain; its full sequence is MEILRIEPTPSPNTMKVVLSYTREDKLSNTYKKVEENQPRFINQLLSIDGITSIFHVMNFLAVDKAPKADWEDILPDIKAAFSGESQVLESGKDPQIDNHFGEIKAELLTFKGIPYQIKLTSADQELREQLPQTYVDHMTQAQTKHDNIVFMRKWLDLGNRYGNIEEVMDGVLEEVLATYPESQLPVLVKHALEENHATNNYHFYRHVSLDEYHATDNWKTRLRMLNHFPKPTFEDIPLLDLALSDEKVPVRRQAIVLLGMIESKEILPYLYKGLRDKSPAVRRTAGDCISDLGYPEALPEMVLLLDDPQKIVRWRAAMFIFDEGNAEQLPALKAHINDNAFEVKLQIEMAISRIENGDEALGSVWKQMTNRTI.

Belongs to the CvfC family.

Required for hemolysin production. This Staphylococcus aureus (strain MRSA252) protein is Conserved virulence factor C (cvfC).